We begin with the raw amino-acid sequence, 246 residues long: 3-deoxy-manno-octulosonate cytidylyltransferase (246 aa).

The protein belongs to the KdsB family.

The protein resides in the cytoplasm. The catalysed reaction is 3-deoxy-alpha-D-manno-oct-2-ulosonate + CTP = CMP-3-deoxy-beta-D-manno-octulosonate + diphosphate. The protein operates within nucleotide-sugar biosynthesis; CMP-3-deoxy-D-manno-octulosonate biosynthesis; CMP-3-deoxy-D-manno-octulosonate from 3-deoxy-D-manno-octulosonate and CTP: step 1/1. It participates in bacterial outer membrane biogenesis; lipopolysaccharide biosynthesis. Functionally, activates KDO (a required 8-carbon sugar) for incorporation into bacterial lipopolysaccharide in Gram-negative bacteria. This chain is 3-deoxy-manno-octulosonate cytidylyltransferase, found in Myxococcus xanthus (strain DK1622).